The sequence spans 535 residues: UDP-glucuronosyltransferase 1A1 (535 aa).

The signal sequence occupies residues 1 to 29 (MSVVCRSSCSLLLLPCLLLCVLGPSASHA). N-linked (GlcNAc...) asparagine glycans are attached at residues Asn89, Asn297, and Asn435. The helical transmembrane segment at 493-509 (VIGFLLAIVLTVVFIVY) threads the bilayer.

It belongs to the UDP-glycosyltransferase family. Homodimers. Homooligomer. Interacts with UGT1A3, UGT1A4, UGT1A6, UGT1A7, UGT1A8, UGT1A9 and UGT1A10 to form heterodimers.

The protein resides in the endoplasmic reticulum membrane. It carries out the reaction glucuronate acceptor + UDP-alpha-D-glucuronate = acceptor beta-D-glucuronoside + UDP + H(+). The enzyme catalyses 17beta-estradiol + UDP-alpha-D-glucuronate = 17beta-estradiol 3-O-(beta-D-glucuronate) + UDP + H(+). The catalysed reaction is 2-hydroxyestrone + UDP-alpha-D-glucuronate = 2-hydroxyestrone 3-O-(beta-D-glucuronate) + UDP + H(+). It catalyses the reaction 2-hydroxy-17beta-estradiol + UDP-alpha-D-glucuronate = 2-hydroxy-17beta-estradiol 3-O-(beta-D-glucuronate) + UDP + H(+). It carries out the reaction 2-methoxy-17beta-estradiol + UDP-alpha-D-glucuronate = 2-methoxy-17beta-estradiol 3-O-(beta-D-glucuronate) + UDP + H(+). The enzyme catalyses 17alpha-estradiol + UDP-alpha-D-glucuronate = 17alpha-estradiol 3-O-(beta-D-glucuronate) + UDP + H(+). The catalysed reaction is 16beta,17beta-estriol + UDP-alpha-D-glucuronate = 16beta,17beta-estriol 16-O-(beta-D-glucuronate) + UDP + H(+). It catalyses the reaction losartan + UDP-alpha-D-glucuronate = losartan-2-N-beta-D-glucuronide + UDP. It carries out the reaction prunetin + UDP-alpha-D-glucuronate = prunetin-4'-O-beta-D-glucuronide + UDP. The enzyme catalyses SN-38 + UDP-alpha-D-glucuronate = SN-38 O-beta-D-glucuronide + UDP + H(+). The catalysed reaction is (4Z,15Z)-bilirubin IXalpha + UDP-alpha-D-glucuronate = (4Z,15Z)-bilirubin IXalpha C12-beta-D-glucuronoside + UDP. It catalyses the reaction (4Z,15Z)-bilirubin IXalpha + UDP-alpha-D-glucuronate = (4Z,15Z)-bilirubin IXalpha C8-beta-D-glucuronoside + UDP. It carries out the reaction (4Z,15Z)-bilirubin IXalpha C8-beta-D-glucuronoside + UDP-alpha-D-glucuronate = (4Z,15Z)-bilirubin IXalpha C8,C12-beta-D-bisglucuronoside + UDP. The enzyme catalyses (4Z,15Z)-bilirubin IXalpha C12-beta-D-glucuronoside + UDP-alpha-D-glucuronate = (4Z,15Z)-bilirubin IXalpha C8,C12-beta-D-bisglucuronoside + UDP. The catalysed reaction is 8-iso-prostaglandin F2alpha + UDP-alpha-D-glucuronate = 8-iso-prostaglandin F2alpha-glucuronide + UDP + H(+). It catalyses the reaction (5Z,8Z,11Z,14Z)-eicosatetraenoate + UDP-alpha-D-glucuronate = O-[(5Z),(8Z),(11Z),(14Z)-eicosatetraenoyl]-beta-D-glucuronate + UDP. It carries out the reaction 15-hydroxy-(5Z,8Z,11Z,13E)-eicosatetraenoate + UDP-alpha-D-glucuronate = 15-O-(beta-D-glucuronosyl)-(5Z,8Z,11Z,14Z)-eicosatetraenoate + UDP + H(+). The enzyme catalyses 20-hydroxy-(5Z,8Z,11Z,14Z)-eicosatetraenoate + UDP-alpha-D-glucuronate = 20-O-(beta-D-glucuronosyl)-(5Z,8Z,11Z,14Z)-eicosatetraenoate + UDP + H(+). The catalysed reaction is prostaglandin B1 + UDP-alpha-D-glucuronate = 15-O-(beta-D-glucuronosyl)-prostaglandin B1 + UDP + H(+). It catalyses the reaction (E)-ferulate + UDP-alpha-D-glucuronate = (E)-4-O-(beta-D-glucuronosyl)-ferulate + UDP + H(+). It carries out the reaction (E)-ferulate + UDP-alpha-D-glucuronate = (E)-ferulic acid beta-D-glucuronate ester + UDP. UDP-glucuronosyltransferase (UGT) that catalyzes phase II biotransformation reactions in which lipophilic substrates are conjugated with glucuronic acid to increase the metabolite's water solubility, thereby facilitating excretion into either the urine or bile. Essential for the elimination and detoxification of drugs, xenobiotics and endogenous compounds. Catalyzes the glucuronidation of endogenous estrogen hormones such as estradiol, estrone and estriol. Involved in the glucuronidation of bilirubin, a degradation product occurring in the normal catabolic pathway that breaks down heme in vertebrates. Involved in the glucuronidation of arachidonic acid (AA) and AA-derived eicosanoids including 15-HETE, 20-HETE, PGB1 and F2-isoprostane (8-iso-PGF2alpha). Involved in the glucuronidation of the phytochemical ferulic acid at the phenolic or the carboxylic acid group. Also catalyzes the glucuronidation the isoflavones genistein, daidzein, glycitein, formononetin, biochanin A and prunetin, which are phytoestrogens with anticancer and cardiovascular properties. Involved in the glucuronidation of the AGTR1 angiotensin receptor antagonist losartan, a drug which can inhibit the effect of angiotensin II. Involved in the biotransformation of 7-ethyl-10-hydroxycamptothecin (SN-38), the pharmacologically active metabolite of the anticancer drug irinotecan. The chain is UDP-glucuronosyltransferase 1A1 from Rattus norvegicus (Rat).